Here is a 365-residue protein sequence, read N- to C-terminus: NADH-quinone oxidoreductase subunit H (365 aa).

8 consecutive transmembrane segments (helical) span residues 27 to 47 (LLLI…LTFA), 99 to 119 (FLFL…WAVV), 133 to 153 (ALLY…IAGW), 168 to 188 (AAQV…VLMM), 206 to 226 (FLNW…ISGV), 268 to 288 (ILVA…PVDI), 294 to 314 (IPGV…FLWF), and 329 to 349 (LGWK…GAVM).

Belongs to the complex I subunit 1 family. As to quaternary structure, NDH-1 is composed of 14 different subunits. Subunits NuoA, H, J, K, L, M, N constitute the membrane sector of the complex.

It localises to the cell inner membrane. The enzyme catalyses a quinone + NADH + 5 H(+)(in) = a quinol + NAD(+) + 4 H(+)(out). NDH-1 shuttles electrons from NADH, via FMN and iron-sulfur (Fe-S) centers, to quinones in the respiratory chain. The immediate electron acceptor for the enzyme in this species is believed to be ubiquinone. Couples the redox reaction to proton translocation (for every two electrons transferred, four hydrogen ions are translocated across the cytoplasmic membrane), and thus conserves the redox energy in a proton gradient. This subunit may bind ubiquinone. The polypeptide is NADH-quinone oxidoreductase subunit H (Nitrosomonas eutropha (strain DSM 101675 / C91 / Nm57)).